Reading from the N-terminus, the 376-residue chain is MANQLSYSSLGWPYQPNASVVDTMPKEMLYMIHEHWYAFPPMNPLWYSILGVAMIILGIICVLGNGMVIYLMMTTKSLRTPTNLLVVNLAFSDFCMMAFMMPTMTSNCFAETWILGPFMCEVYGMAGSLFGCASIWSMVMITLDRYNVIVRGMAAAPLTHKKATLLLLFVWIWSGGWTILPFFGWSRYVPEGNLTSCTVDYLTKDWSSASYVVIYGLAVYFLPLITMIYCYFFIVHAVAEHEKQLREQAKKMNVASLRANADQQKQSAECRLAKVAMMTVGLWFMAWTPYLIISWAGVFSSGTRLTPLATIWGSVFAKANSCYNPIVYGISHPRYKAALYQRFPSLACGSGESGSDVKSEASATTTMEEKPKIPEA.

The Extracellular portion of the chain corresponds to 1-46; the sequence is MANQLSYSSLGWPYQPNASVVDTMPKEMLYMIHEHWYAFPPMNPLW. The N-linked (GlcNAc...) asparagine glycan is linked to Asn17. The helical transmembrane segment at 47–71 threads the bilayer; sequence YSILGVAMIILGIICVLGNGMVIYL. Over 72 to 83 the chain is Cytoplasmic; that stretch reads MMTTKSLRTPTN. A helical membrane pass occupies residues 84–108; sequence LLVVNLAFSDFCMMAFMMPTMTSNC. Over 109–123 the chain is Extracellular; that stretch reads FAETWILGPFMCEVY. Cys120 and Cys197 form a disulfide bridge. A helical membrane pass occupies residues 124–143; sequence GMAGSLFGCASIWSMVMITL. At 144–162 the chain is on the cytoplasmic side; sequence DRYNVIVRGMAAAPLTHKK. Residues 163-186 form a helical membrane-spanning segment; the sequence is ATLLLLFVWIWSGGWTILPFFGWS. Residues 187-210 lie on the Extracellular side of the membrane; the sequence is RYVPEGNLTSCTVDYLTKDWSSAS. Asn193 carries an N-linked (GlcNAc...) asparagine glycan. A helical transmembrane segment spans residues 211–238; it reads YVVIYGLAVYFLPLITMIYCYFFIVHAV. At 239–274 the chain is on the cytoplasmic side; it reads AEHEKQLREQAKKMNVASLRANADQQKQSAECRLAK. A helical membrane pass occupies residues 275–298; it reads VAMMTVGLWFMAWTPYLIISWAGV. Residues 299–306 are Extracellular-facing; that stretch reads FSSGTRLT. The chain crosses the membrane as a helical span at residues 307 to 331; that stretch reads PLATIWGSVFAKANSCYNPIVYGIS. The residue at position 318 (Lys318) is an N6-(retinylidene)lysine. The Cytoplasmic segment spans residues 332-376; that stretch reads HPRYKAALYQRFPSLACGSGESGSDVKSEASATTTMEEKPKIPEA. A disordered region spans residues 349–376; sequence GSGESGSDVKSEASATTTMEEKPKIPEA. Positions 367-376 are enriched in basic and acidic residues; that stretch reads MEEKPKIPEA.

Belongs to the G-protein coupled receptor 1 family. Opsin subfamily. Post-translationally, phosphorylated on some or all of the serine and threonine residues present in the C-terminal region. As to expression, lateral eye.

It localises to the membrane. Visual pigments are the light-absorbing molecules that mediate vision. They consist of an apoprotein, opsin, covalently linked to cis-retinal. The chain is Lateral eye opsin from Limulus polyphemus (Atlantic horseshoe crab).